Consider the following 345-residue polypeptide: Biotin synthase (345 aa).

Residues 67 to 295 (YKVQLASLLS…KSRIRLSAGR (229 aa)) enclose the Radical SAM core domain. Residues Cys82, Cys86, and Cys89 each coordinate [4Fe-4S] cluster. [2Fe-2S] cluster is bound by residues Cys126, Cys158, Cys218, and Arg290.

It belongs to the radical SAM superfamily. Biotin synthase family. As to quaternary structure, homodimer. [4Fe-4S] cluster serves as cofactor. It depends on [2Fe-2S] cluster as a cofactor.

The enzyme catalyses (4R,5S)-dethiobiotin + (sulfur carrier)-SH + 2 reduced [2Fe-2S]-[ferredoxin] + 2 S-adenosyl-L-methionine = (sulfur carrier)-H + biotin + 2 5'-deoxyadenosine + 2 L-methionine + 2 oxidized [2Fe-2S]-[ferredoxin]. The protein operates within cofactor biosynthesis; biotin biosynthesis; biotin from 7,8-diaminononanoate: step 2/2. Catalyzes the conversion of dethiobiotin (DTB) to biotin by the insertion of a sulfur atom into dethiobiotin via a radical-based mechanism. This chain is Biotin synthase, found in Prochlorococcus marinus (strain NATL1A).